A 534-amino-acid polypeptide reads, in one-letter code: Nuclear polyadenylated RNA-binding protein 4 (534 aa).

Residues 1 to 154 form a disordered region; sequence MSSDEEDFND…TKEERSKADL (154 aa). Residues serine 2 and serine 3 each carry the phosphoserine modification. Basic and acidic residues predominate over residues 13 to 30; that stretch reads GDDKPTTTEEVKKEEEQN. Low complexity predominate over residues 37–78; that stretch reads SQLDQLAALQALSSSLNKLNNPNSNNSSSNNSNQDTSSSKQD. Residues serine 51 and serine 87 each carry the phosphoserine modification. Positions 81–98 are enriched in basic and acidic residues; that stretch reads ANDKEGSNEDTKNEKKQE. Low complexity-rich tracts occupy residues 99–112 and 121–144; these read SATS…ASSA and QLQQ…QVTQ. A compositionally biased stretch (basic and acidic residues) spans 145–154; that stretch reads TKEERSKADL. 2 RRM domains span residues 159–241 and 243–320; these read CKMF…EQDK and GKIF…RAEP. Serine 206 carries the phosphoserine modification. 2 disordered regions span residues 316-354 and 415-534; these read KRAE…DFNQ and MPPN…PYNR. Residues 336–354 are compositionally biased toward low complexity; that stretch reads GNNMNRRGGNFGNQGDFNQ. The span at 420 to 459 shows a compositional bias: polar residues; sequence MTLNQPQQDSNATQGSPAPSDSDNNKSNDVQTIGNTSNTD. Residue threonine 458 is modified to Phosphothreonine. Phosphoserine is present on residues serine 460 and serine 462. A compositionally biased stretch (low complexity) spans 460–475; that stretch reads SGSPPLNLPNGPKGPS. Residues 478 to 505 are compositionally biased toward basic and acidic residues; it reads NDDHNSGYGYNRDRGDRDRNDRDRDYNH. Arginine 519 carries the post-translational modification Omega-N-methylarginine. A compositionally biased stretch (low complexity) spans 523–534; the sequence is NRRNNGYHPYNR.

In terms of assembly, interacts with NAM7. Post-translationally, methylated by HMT1. The methylation is required for nuclear export.

The protein localises to the cytoplasm. It is found in the nucleus. The protein resides in the stress granule. Its function is as follows. RNA-binding protein, which is involved in the polyadenylation-dependent pre-mRNA 3'-end formation and cooperates with the cleavage factor CFIA complex and the cleavage and polyadenylation factor (CPF) complex. May be involved in regulation of poly(A) site selection. Is involved in nonsense-mediated mRNA decay. Seems to bind to an RNA downstream sequence element (DSE) located 3' of a nonsense codon and may mark the transcript for decay. The sequence is that of Nuclear polyadenylated RNA-binding protein 4 from Saccharomyces cerevisiae (strain ATCC 204508 / S288c) (Baker's yeast).